Reading from the N-terminus, the 297-residue chain is uncharacterized protein (297 aa).

The HTH lysR-type domain occupies 1-60 (MNIELRHLRYFVAVAEELHFGRAAARLNISQPPLSQQIQALEQQIGARLLARTNRSVLLT). The H-T-H motif DNA-binding region spans 20–40 (FGRAAARLNISQPPLSQQIQA).

Belongs to the LysR transcriptional regulatory family.

This is an uncharacterized protein from Escherichia coli (strain K12).